The sequence spans 284 residues: Tropomyosin-2 (284 aa).

Residues 1 to 284 (MDAIKKKMQA…DQTFAELTGY (284 aa)) are a coiled coil. The interval 82-110 (ESEVATQNRKVQQIEEDLEKSEERSTTAQ) is disordered.

Belongs to the tropomyosin family. Homodimer.

Tropomyosin, in association with the troponin complex, plays a central role in the calcium dependent regulation of muscle contraction. May also regulate motor systems required to maintain nuclear integrity and apico-basal polarity during embryogenesis. In Drosophila melanogaster (Fruit fly), this protein is Tropomyosin-2 (Tm2).